We begin with the raw amino-acid sequence, 1205 residues long: ATP-dependent DNA helicase MER3 homolog (1205 aa).

Residues 41–236 form the Helicase ATP-binding domain; that stretch reads PACFLSDVNM…WLAVPSEGIK (196 aa). 54-61 is an ATP binding site; sequence APTGSGKT. The DEAH box signature appears at 172 to 175; the sequence is DEVH. Positions 266–467 constitute a Helicase C-terminal domain; that stretch reads RLQSFIFDIL…CAVEHLNAEI (202 aa). The SEC63 domain maps to 541 to 852; that stretch reads PLEPGRLMTK…FEEYVGLDIH (312 aa). Over residues 1075 to 1091 the composition is skewed to polar residues; the sequence is QKSEILNRTQGKNSTQL. Residues 1075–1131 form a disordered region; the sequence is QKSEILNRTQGKNSTQLAGKKAFEKSKTPDENSLHFVGKRDSSSEKSKALSKTPDEN. A compositionally biased stretch (basic and acidic residues) spans 1095–1122; the sequence is KAFEKSKTPDENSLHFVGKRDSSSEKSK.

It belongs to the helicase family. SKI2 subfamily. As to expression, transcribed preferentially in early stages of meiocyte development and during meiosis in young flowers.

The protein resides in the nucleus. Its subcellular location is the chromosome. The catalysed reaction is Couples ATP hydrolysis with the unwinding of duplex DNA by translocating in the 3'-5' direction.. The enzyme catalyses ATP + H2O = ADP + phosphate + H(+). Functionally, DNA helicase required for crossover formation, complete synapsis of homologous chromosomes and bivalent formation during meiosis. Is specific to recombination events resulting in interference-sensitive crossovers (class I meiotic crossover). Works cooperatively with ZIP4 to promote crossovers. This chain is ATP-dependent DNA helicase MER3 homolog, found in Oryza sativa subsp. japonica (Rice).